The following is a 56-amino-acid chain: Large ribosomal subunit protein eL40 (56 aa).

Belongs to the eukaryotic ribosomal protein eL40 family.

The protein is Large ribosomal subunit protein eL40 of Saccharolobus islandicus (strain Y.N.15.51 / Yellowstone #2) (Sulfolobus islandicus).